A 152-amino-acid polypeptide reads, in one-letter code: Probable ribose-5-phosphate isomerase B (152 aa).

10–11 (DH) is a binding site for D-ribulose 5-phosphate. Catalysis depends on C69, which acts as the Proton acceptor. 70 to 74 (GTGVG) is a binding site for D-ribulose 5-phosphate. The Proton donor role is filled by H102. D-ribulose 5-phosphate-binding residues include D103, R113, R136, and R140.

It belongs to the LacAB/RpiB family. As to quaternary structure, homodimer.

The enzyme catalyses aldehydo-D-ribose 5-phosphate = D-ribulose 5-phosphate. Its pathway is carbohydrate degradation; pentose phosphate pathway; D-ribose 5-phosphate from D-ribulose 5-phosphate (non-oxidative stage): step 1/1. Catalyzes the interconversion of ribulose-5-P and ribose-5-P. This chain is Probable ribose-5-phosphate isomerase B, found in Mycoplasma genitalium (strain ATCC 33530 / DSM 19775 / NCTC 10195 / G37) (Mycoplasmoides genitalium).